Consider the following 253-residue polypeptide: Complement C1q subcomponent subunit B (253 aa).

Positions 1 to 25 (MKTQWGEVWTHLLLLLLGFLHVSWA) are cleaved as a signal peptide. Pyrrolidone carboxylic acid is present on Gln26. A Collagen-like domain is found at 29–112 (CTGPPGIPGI…GPRGPKGDSG (84 aa)). 5 positions are modified to 4-hydroxyproline: Pro33, Pro36, Pro39, Pro51, and Pro54. Residues 35-115 (IPGIPGVPGV…GPKGDSGDYG (81 aa)) form a disordered region. 5-hydroxylysine occurs at positions 57 and 60. The residue at position 63 (Pro63) is a 4-hydroxyproline. Residue Lys75 is modified to 5-hydroxylysine. Residues 78–96 (PGIPGTPGKVGPKGPVGPK) show a composition bias toward low complexity. 2 positions are modified to 4-hydroxyproline: Pro81 and Pro84. A 5-hydroxylysine mark is found at Lys90 and Lys96. Pro99 carries the post-translational modification 4-hydroxyproline. Residue Lys108 is modified to 5-hydroxylysine. Positions 115-253 (GATQKVAFSA…GFLLFPDMDA (139 aa)) constitute a C1q domain. The cysteines at positions 179 and 198 are disulfide-linked. Positions 199, 200, and 206 each coordinate Ca(2+).

In terms of assembly, core component of the complement C1 complex, a calcium-dependent complex composed of 1 molecule of the C1Q subcomplex, 2 molecules of C1R and 2 molecules of C1S. The C1Q subcomplex is composed 18 subunits: 3 chains of C1QA, C1QB, and C1QC trimerize to form 6 collagen-like triple helices connected to six globular ligand-recognition modules (C1q domain). Hydroxylated on lysine and proline residues. Hydroxylated lysine residues can be glycosylated. Mouse C1Q contains up to 64.0 hydroxylysine-galactosylglucose residues. Total percentage hydroxylysine residues glycosylated is 95.1%. Contains no hydroxylysine-monosaccharides. As to expression, highest expression in thioglycolate-activated peritoneal macrophages. Also found in spleen, thymus and heart. Very weak expression liver, kidney, lung and intestine.

Its subcellular location is the secreted. It localises to the cell surface. The C1Q subcomplex is inhibited by sulfated molecules, such as triterpenoid sulfates, heparan sulfate, or chondroitin sulfates. Its function is as follows. Core component of the complement C1 complex, a multiprotein complex that initiates the classical pathway of the complement system, a cascade of proteins that leads to phagocytosis and breakdown of pathogens and signaling that strengthens the adaptive immune system. The classical complement pathway is initiated by the C1Q subcomplex of the C1 complex, which specifically binds IgG or IgM immunoglobulins complexed with antigens, forming antigen-antibody complexes on the surface of pathogens: C1QA, together with C1QB and C1QC, specifically recognizes and binds the Fc regions of IgG or IgM via its C1q domain. Immunoglobulin-binding activates the proenzyme C1R, which cleaves C1S, initiating the proteolytic cascade of the complement system. The C1Q subcomplex is activated by a hexamer of IgG complexed with antigens, while it is activated by a pentameric IgM. The C1Q subcomplex also recognizes and binds phosphatidylserine exposed on the surface of cells undergoing programmed cell death, possibly promoting activation of the complement system. The sequence is that of Complement C1q subcomponent subunit B from Mus musculus (Mouse).